We begin with the raw amino-acid sequence, 1118 residues long: Receptor-type guanylate cyclase gcy-2 (1118 aa).

Positions Met-1 to Ala-21 are cleaved as a signal peptide. Over Gln-22–Tyr-494 the chain is Extracellular. N-linked (GlcNAc...) asparagine glycans are attached at residues Asn-222, Asn-351, Asn-361, Asn-387, Asn-420, and Asn-452. Residues Met-495–Gly-515 form a helical membrane-spanning segment. At Cys-516 to Asn-1118 the chain is on the cytoplasmic side. The region spanning Leu-558–Phe-875 is the Protein kinase domain. The 131-residue stretch at Thr-872–Glu-1002 folds into the Guanylate cyclase domain. The segment at Trp-1076–Leu-1103 is disordered.

This sequence belongs to the adenylyl cyclase class-4/guanylyl cyclase family. As to expression, expressed bilaterally in AWA and ASI sensory neurons and in RIA and PVT interneurons.

It is found in the cell membrane. The enzyme catalyses GTP = 3',5'-cyclic GMP + diphosphate. Guanylate cyclase involved in the production of the second messenger cGMP. In Caenorhabditis elegans, this protein is Receptor-type guanylate cyclase gcy-2.